A 136-amino-acid polypeptide reads, in one-letter code: Protein NrdI (136 aa).

This sequence belongs to the NrdI family.

Functionally, probably involved in ribonucleotide reductase function. This chain is Protein NrdI, found in Escherichia coli O127:H6 (strain E2348/69 / EPEC).